The sequence spans 688 residues: Glycine--tRNA ligase beta subunit (688 aa).

Belongs to the class-II aminoacyl-tRNA synthetase family. Tetramer of two alpha and two beta subunits.

Its subcellular location is the cytoplasm. It carries out the reaction tRNA(Gly) + glycine + ATP = glycyl-tRNA(Gly) + AMP + diphosphate. The chain is Glycine--tRNA ligase beta subunit from Geotalea uraniireducens (strain Rf4) (Geobacter uraniireducens).